The sequence spans 295 residues: Indole-3-glycerol phosphate synthase (295 aa).

This sequence belongs to the TrpC family.

The catalysed reaction is 1-(2-carboxyphenylamino)-1-deoxy-D-ribulose 5-phosphate + H(+) = (1S,2R)-1-C-(indol-3-yl)glycerol 3-phosphate + CO2 + H2O. The protein operates within amino-acid biosynthesis; L-tryptophan biosynthesis; L-tryptophan from chorismate: step 4/5. This is Indole-3-glycerol phosphate synthase from Prochlorococcus marinus (strain MIT 9215).